Here is a 150-residue protein sequence, read N- to C-terminus: Probable cyclic pyranopterin monophosphate synthase (150 aa).

Substrate-binding positions include 68–70 (YCH) and 104–105 (ME). Asp119 is an active-site residue.

This sequence belongs to the MoaC family. In terms of assembly, homohexamer; trimer of dimers.

It catalyses the reaction (8S)-3',8-cyclo-7,8-dihydroguanosine 5'-triphosphate = cyclic pyranopterin phosphate + diphosphate. The protein operates within cofactor biosynthesis; molybdopterin biosynthesis. Functionally, catalyzes the conversion of (8S)-3',8-cyclo-7,8-dihydroguanosine 5'-triphosphate to cyclic pyranopterin monophosphate (cPMP). The protein is Probable cyclic pyranopterin monophosphate synthase of Thermoplasma volcanium (strain ATCC 51530 / DSM 4299 / JCM 9571 / NBRC 15438 / GSS1).